A 240-amino-acid chain; its full sequence is Phosphoribosylaminoimidazole-succinocarboxamide synthase (240 aa).

It belongs to the SAICAR synthetase family.

The enzyme catalyses 5-amino-1-(5-phospho-D-ribosyl)imidazole-4-carboxylate + L-aspartate + ATP = (2S)-2-[5-amino-1-(5-phospho-beta-D-ribosyl)imidazole-4-carboxamido]succinate + ADP + phosphate + 2 H(+). It functions in the pathway purine metabolism; IMP biosynthesis via de novo pathway; 5-amino-1-(5-phospho-D-ribosyl)imidazole-4-carboxamide from 5-amino-1-(5-phospho-D-ribosyl)imidazole-4-carboxylate: step 1/2. In Pyrobaculum calidifontis (strain DSM 21063 / JCM 11548 / VA1), this protein is Phosphoribosylaminoimidazole-succinocarboxamide synthase.